Reading from the N-terminus, the 144-residue chain is MPLQIFNTTRKELHEELLERTVIDVLDSEGFGVESIVAVYCGKKMIRKINREFLQHDYATDTITFRYSDNREIDGEFYISLDVIEENARRFEVDFKLELLRVTIHSALHLIGYDDQTVDGRLQMQQKEEFYLNRYSEANNQTPS.

Zn(2+) contacts are provided by histidine 105, histidine 109, and aspartate 115.

The protein belongs to the endoribonuclease YbeY family. Requires Zn(2+) as cofactor.

The protein resides in the cytoplasm. In terms of biological role, single strand-specific metallo-endoribonuclease involved in late-stage 70S ribosome quality control and in maturation of the 3' terminus of the 16S rRNA. The sequence is that of Endoribonuclease YbeY from Chlorobium limicola (strain DSM 245 / NBRC 103803 / 6330).